The sequence spans 70 residues: Movement protein TGBp3 (70 aa).

The Lumenal segment spans residues 1–4; the sequence is MEVN. A helical transmembrane segment spans residues 5 to 27; it reads TYLNAIILVLVVTIIAVISTSLV. Over 28-70 the chain is Cytoplasmic; it reads RTEPCVIKITGESITVLACKLDAETIKAIADLKPLSVERLSFH.

It belongs to the Tymovirales TGBp3 protein family.

It is found in the host endoplasmic reticulum membrane. Plays a role in viral cell-to-cell propagation, by facilitating genome transport to neighboring plant cells through plasmosdesmata. May induce the formation of granular vesicles derived from the endoplasmic reticulum, which align on actin filaments. The sequence is that of Movement protein TGBp3 from Brassica campestris (Field mustard).